A 495-amino-acid polypeptide reads, in one-letter code: Phosphomethylpyrimidine synthase (495 aa).

Substrate-binding positions include N125, M154, Y183, H219, S239 to G241, D280 to R283, and E319. H323 lines the Zn(2+) pocket. Residue Y346 coordinates substrate. H387 contributes to the Zn(2+) binding site. The [4Fe-4S] cluster site is built by C467, C470, and C475.

Belongs to the ThiC family. The cofactor is [4Fe-4S] cluster.

The catalysed reaction is 5-amino-1-(5-phospho-beta-D-ribosyl)imidazole + S-adenosyl-L-methionine = 4-amino-2-methyl-5-(phosphooxymethyl)pyrimidine + CO + 5'-deoxyadenosine + formate + L-methionine + 3 H(+). It participates in cofactor biosynthesis; thiamine diphosphate biosynthesis. Functionally, catalyzes the synthesis of the hydroxymethylpyrimidine phosphate (HMP-P) moiety of thiamine from aminoimidazole ribotide (AIR) in a radical S-adenosyl-L-methionine (SAM)-dependent reaction. This chain is Phosphomethylpyrimidine synthase, found in Leptospira interrogans serogroup Icterohaemorrhagiae serovar copenhageni (strain Fiocruz L1-130).